Here is a 29-residue protein sequence, read N- to C-terminus: Cuticle protein 36 (29 aa).

Functionally, component of the cuticle of migratory locust which contains more than 100 different structural proteins. This is Cuticle protein 36 from Locusta migratoria (Migratory locust).